The sequence spans 159 residues: S-ribosylhomocysteine lyase (159 aa).

Fe cation contacts are provided by His53, His57, and Cys124.

Belongs to the LuxS family. In terms of assembly, homodimer. Fe cation is required as a cofactor.

The catalysed reaction is S-(5-deoxy-D-ribos-5-yl)-L-homocysteine = (S)-4,5-dihydroxypentane-2,3-dione + L-homocysteine. In terms of biological role, involved in the synthesis of autoinducer 2 (AI-2) which is secreted by bacteria and is used to communicate both the cell density and the metabolic potential of the environment. The regulation of gene expression in response to changes in cell density is called quorum sensing. Catalyzes the transformation of S-ribosylhomocysteine (RHC) to homocysteine (HC) and 4,5-dihydroxy-2,3-pentadione (DPD). The chain is S-ribosylhomocysteine lyase from Porphyromonas gingivalis (strain ATCC 33277 / DSM 20709 / CIP 103683 / JCM 12257 / NCTC 11834 / 2561).